We begin with the raw amino-acid sequence, 555 residues long: Adenine deaminase (555 aa).

The protein belongs to the metallo-dependent hydrolases superfamily. Adenine deaminase family. Requires Mn(2+) as cofactor.

The catalysed reaction is adenine + H2O + H(+) = hypoxanthine + NH4(+). In Methanosarcina mazei (strain ATCC BAA-159 / DSM 3647 / Goe1 / Go1 / JCM 11833 / OCM 88) (Methanosarcina frisia), this protein is Adenine deaminase.